An 86-amino-acid polypeptide reads, in one-letter code: Large ribosomal subunit protein bL31B (86 aa).

This sequence belongs to the bacterial ribosomal protein bL31 family. Type B subfamily. Part of the 50S ribosomal subunit.

This chain is Large ribosomal subunit protein bL31B, found in Salmonella agona (strain SL483).